The primary structure comprises 303 residues: Aspartate carbamoyltransferase catalytic subunit (303 aa).

Carbamoyl phosphate is bound by residues R49 and T50. K77 is a binding site for L-aspartate. Residues R99, H126, and Q129 each coordinate carbamoyl phosphate. Residues R159 and R211 each contribute to the L-aspartate site. Residues S252 and P253 each coordinate carbamoyl phosphate.

The protein belongs to the aspartate/ornithine carbamoyltransferase superfamily. ATCase family. In terms of assembly, heterododecamer (2C3:3R2) of six catalytic PyrB chains organized as two trimers (C3), and six regulatory PyrI chains organized as three dimers (R2).

The catalysed reaction is carbamoyl phosphate + L-aspartate = N-carbamoyl-L-aspartate + phosphate + H(+). Its pathway is pyrimidine metabolism; UMP biosynthesis via de novo pathway; (S)-dihydroorotate from bicarbonate: step 2/3. In terms of biological role, catalyzes the condensation of carbamoyl phosphate and aspartate to form carbamoyl aspartate and inorganic phosphate, the committed step in the de novo pyrimidine nucleotide biosynthesis pathway. The polypeptide is Aspartate carbamoyltransferase catalytic subunit (Listeria welshimeri serovar 6b (strain ATCC 35897 / DSM 20650 / CCUG 15529 / CIP 8149 / NCTC 11857 / SLCC 5334 / V8)).